A 248-amino-acid polypeptide reads, in one-letter code: PF03932 family protein CutC (248 aa).

Belongs to the CutC family. Homodimer.

It localises to the cytoplasm. The protein is PF03932 family protein CutC of Salmonella schwarzengrund (strain CVM19633).